A 310-amino-acid polypeptide reads, in one-letter code: 4-hydroxyproline 2-epimerase (310 aa).

The active-site Proton acceptor is the C88. Substrate contacts are provided by residues 89 to 90 (GH), H208, and D232. C236 serves as the catalytic Proton donor. 237–238 (GT) is a substrate binding site.

It belongs to the proline racemase family.

It carries out the reaction trans-4-hydroxy-L-proline = cis-4-hydroxy-D-proline. Catalyzes the epimerization of trans-4-hydroxy-L-proline (t4LHyp) to cis-4-hydroxy-D-proline (c4DHyp). Is likely involved in a degradation pathway that converts t4LHyp to alpha-ketoglutarate. Displays no proline racemase activity. This chain is 4-hydroxyproline 2-epimerase, found in Pseudomonas fluorescens (strain ATCC BAA-477 / NRRL B-23932 / Pf-5).